The primary structure comprises 394 residues: MIISAASDYRAAAQRILPPFLFHYIDGGAYAEHTLRRNVEDLSDVALRQRILRNMSDLSLETTLFNEKLAMPTALAPVGLCGMYARRGEVQAAGAADDKGIPFTLSTVSVCPIEEVAPTIKRPMWFQLYVLRDRGFMRNALERAKAAGCSTLVFTVDMPTPGARYRDAHSGMSGPNAALRRYWQAVTHPQWAWDVGLNGRPHDLGNISAYLGKPTGLEDYIGWLANNFDPSISWKDLEWIRDFWDGPMVIKGILDPEDARDAVRFGADGIVVSNHGGRQLDGVLSSARALPAIADAVKGDITILADSGIRNGLDVVRMIALGADSVLLGRAYLYALATHGKQGVANLLNLIEKEMKVAMTLTGAKSIREISRDSLVQNAEALQTFDALKQNNAA.

The 380-residue stretch at 1–380 (MIISAASDYR…SRDSLVQNAE (380 aa)) folds into the FMN hydroxy acid dehydrogenase domain. Residue Y24 coordinates substrate. Positions 106 and 127 each coordinate FMN. Position 129 (Y129) interacts with substrate. FMN is bound at residue T155. R164 serves as a coordination point for substrate. K251 is an FMN binding site. The active-site Proton acceptor is H275. R278 is a substrate binding site. 306–330 (DSGIRNGLDVVRMIALGADSVLLGR) is a binding site for FMN.

The protein belongs to the FMN-dependent alpha-hydroxy acid dehydrogenase family. The cofactor is FMN.

It localises to the cell inner membrane. The enzyme catalyses (S)-lactate + A = pyruvate + AH2. Catalyzes the conversion of L-lactate to pyruvate. Is coupled to the respiratory chain. This Klebsiella pneumoniae subsp. pneumoniae (strain ATCC 700721 / MGH 78578) protein is L-lactate dehydrogenase.